Consider the following 22-residue polypeptide: MSPLKAVAVLTGADVKGVVQFT.

This sequence belongs to the Cu-Zn superoxide dismutase family. In terms of assembly, homodimer. Cu cation serves as cofactor. It depends on Zn(2+) as a cofactor. As to expression, dominant isozyme in roots.

Its subcellular location is the cytoplasm. The catalysed reaction is 2 superoxide + 2 H(+) = H2O2 + O2. Destroys radicals which are normally produced within the cells and which are toxic to biological systems. This Picea abies (Norway spruce) protein is Superoxide dismutase [Cu-Zn] 2.